A 167-amino-acid polypeptide reads, in one-letter code: U-scoloptoxin(08)-Er5a (167 aa).

A signal peptide spans methionine 1–glycine 22. Residues glutamate 23–arginine 94 constitute a propeptide that is removed on maturation. 3 RLWRNWE repeats span residues arginine 34 to glutamate 40, arginine 61 to glutamate 67, and arginine 86 to glutamate 92. Residue glutamine 95 is modified to Pyrrolidone carboxylic acid. The stretch at glutamate 107–glutamate 113 is one RLWRNWE 4; approximate repeat. Residues tryptophan 112–arginine 118 constitute a propeptide that is removed on maturation. Position 119 is a pyrrolidone carboxylic acid (glutamine 119). Residues arginine 134–glutamate 140 form an RLWRNWE 5 repeat. Positions tryptophan 139–glutamate 167 are excised as a propeptide. The segment at arginine 147 to glutamate 167 is disordered.

The protein belongs to the scoloptoxin-08 family. In terms of tissue distribution, expressed by the venom gland.

It is found in the secreted. The chain is U-scoloptoxin(08)-Er5a from Ethmostigmus rubripes (Giant centipede).